The chain runs to 355 residues: Phosphoserine aminotransferase (355 aa).

Residue arginine 41 coordinates L-glutamate. Pyridoxal 5'-phosphate is bound by residues 75 to 76 (AS), tryptophan 99, threonine 147, aspartate 166, and glutamine 189. Position 190 is an N6-(pyridoxal phosphate)lysine (lysine 190). Pyridoxal 5'-phosphate is bound at residue 231 to 232 (NT).

The protein belongs to the class-V pyridoxal-phosphate-dependent aminotransferase family. SerC subfamily. Homodimer. It depends on pyridoxal 5'-phosphate as a cofactor.

The protein resides in the cytoplasm. It catalyses the reaction O-phospho-L-serine + 2-oxoglutarate = 3-phosphooxypyruvate + L-glutamate. The catalysed reaction is 4-(phosphooxy)-L-threonine + 2-oxoglutarate = (R)-3-hydroxy-2-oxo-4-phosphooxybutanoate + L-glutamate. It participates in amino-acid biosynthesis; L-serine biosynthesis; L-serine from 3-phospho-D-glycerate: step 2/3. The protein operates within cofactor biosynthesis; pyridoxine 5'-phosphate biosynthesis; pyridoxine 5'-phosphate from D-erythrose 4-phosphate: step 3/5. In terms of biological role, catalyzes the reversible conversion of 3-phosphohydroxypyruvate to phosphoserine and of 3-hydroxy-2-oxo-4-phosphonooxybutanoate to phosphohydroxythreonine. This is Phosphoserine aminotransferase from Bacteroides thetaiotaomicron (strain ATCC 29148 / DSM 2079 / JCM 5827 / CCUG 10774 / NCTC 10582 / VPI-5482 / E50).